A 365-amino-acid chain; its full sequence is MVPFPRILGIETSCDETAAAVVERDAEGHSRILSDVVLSQLDEHSAYGGVVPEIAARAHVEALDELIEEALMRANVSLADVDAIAATSGPGLIGGLLVGLMTGKAIAKAAGKPLYAVNHLEGHALTARLTDGLSFPYLMLLVSGGHTQLILVRGVGDYERWGTTIDDALGEAFDKTAKLLGLPYPGGPAVERMARDGNAGRFDFPRPLVGEARLDFSFSGLKTAVRLAAQEIAPLSDQDVADICASFQRAISRTLKDRIGRGLQRFKREFPSIGETPALVVAGGVAANLELRATLQGLCDKNGFRFIAPPLSLCTDNAVMIAWAGLERMAIGVAPDALDVQPRSRWPLDANAERLIGFGKRGAKA.

2 residues coordinate Fe cation: H119 and H123. Substrate is bound by residues 141-145 (LVSGG), D174, G187, and N288. Residue D316 participates in Fe cation binding.

Belongs to the KAE1 / TsaD family. The cofactor is Fe(2+).

It localises to the cytoplasm. The enzyme catalyses L-threonylcarbamoyladenylate + adenosine(37) in tRNA = N(6)-L-threonylcarbamoyladenosine(37) in tRNA + AMP + H(+). In terms of biological role, required for the formation of a threonylcarbamoyl group on adenosine at position 37 (t(6)A37) in tRNAs that read codons beginning with adenine. Is involved in the transfer of the threonylcarbamoyl moiety of threonylcarbamoyl-AMP (TC-AMP) to the N6 group of A37, together with TsaE and TsaB. TsaD likely plays a direct catalytic role in this reaction. The chain is tRNA N6-adenosine threonylcarbamoyltransferase from Rhizobium etli (strain CIAT 652).